A 380-amino-acid polypeptide reads, in one-letter code: Cytochrome b (380 aa).

A run of 4 helical transmembrane segments spans residues 34 to 54 (FGSLLGICLATQILTGLLLAA), 78 to 99 (WLIRNLHANGASFFFICIYLHI), 114 to 134 (WNTGVILLLTLMATAFVGYVL), and 179 to 199 (FFTLHFLLPFMIMGLTLIHLT). Positions 84 and 98 each coordinate heme b. Heme b is bound by residues H183 and H197. H202 serves as a coordination point for a ubiquinone. A run of 4 helical transmembrane segments spans residues 227 to 247 (LKDILGFMLMLLPLMTLALFS), 289 to 309 (LGGVLALAASVLILFLAPLLH), 321 to 341 (FSQLLFWTLTANLLILTWVGS), and 348 to 368 (FIIIGQLASLTYFTILLILFP).

Belongs to the cytochrome b family. As to quaternary structure, the cytochrome bc1 complex contains 11 subunits: 3 respiratory subunits (MT-CYB, CYC1 and UQCRFS1), 2 core proteins (UQCRC1 and UQCRC2) and 6 low-molecular weight proteins (UQCRH/QCR6, UQCRB/QCR7, UQCRQ/QCR8, UQCR10/QCR9, UQCR11/QCR10 and a cleavage product of UQCRFS1). This cytochrome bc1 complex then forms a dimer. Heme b is required as a cofactor.

Its subcellular location is the mitochondrion inner membrane. In terms of biological role, component of the ubiquinol-cytochrome c reductase complex (complex III or cytochrome b-c1 complex) that is part of the mitochondrial respiratory chain. The b-c1 complex mediates electron transfer from ubiquinol to cytochrome c. Contributes to the generation of a proton gradient across the mitochondrial membrane that is then used for ATP synthesis. The polypeptide is Cytochrome b (MT-CYB) (Antigone rubicunda (Brolga crane)).